A 147-amino-acid chain; its full sequence is Large ribosomal subunit protein uL13 (147 aa).

The protein belongs to the universal ribosomal protein uL13 family. Part of the 50S ribosomal subunit.

Its function is as follows. This protein is one of the early assembly proteins of the 50S ribosomal subunit, although it is not seen to bind rRNA by itself. It is important during the early stages of 50S assembly. This Leuconostoc citreum (strain KM20) protein is Large ribosomal subunit protein uL13.